Consider the following 434-residue polypeptide: MSNAPEIVQRLIKMIMRAFYETRHIIFMDAILRHSALTDEQTALLMGIPIKECRFIAGKLREDRLLAIQSRTEMKEGQQRQYHTTYFYIDFCSTIDSIKWRMHQLVKTVEDRMRNDFDSKGYVCPFCNKKFSSLDVLSLVTNEGTFACNVCGTELKDDEESAEMMSSQKRLGKLMGQVNGIIDALKRVDEIVVPQNNFQSALEHAVPVSLDTQNLSQQNLSKSNSDVRLSTSSPSITVDFSADKETDEKRERNCDKQVKAAQNILPEWHATSTISGSITRAGAKDAALHSFRTETVNEVQDTKTDITSEKSALDAYYATLRAKQKEESEFMDSENVDDEEDDDFLDVTTATSLQNKSTDYGSVKRKTENLNSDSDIQNKRTKSIEENNSLPPIVSTNGITDGDTEMQESKKNVIINGFNEDDEDDEDEADFEDV.

An HTH TFE/IIEalpha-type domain is found at 8–99 (VQRLIKMIMR…DFCSTIDSIK (92 aa)). A C4-type zinc finger spans residues 124–151 (CPFCNKKFSSLDVLSLVTNEGTFACNVC). Disordered stretches follow at residues 217–251 (QQNL…EKRE), 357–408 (STDY…EMQE), and 415–434 (INGF…FEDV). Positions 226 to 238 (DVRLSTSSPSITV) are enriched in polar residues. Basic and acidic residues-rich tracts occupy residues 241–251 (SADKETDEKRE) and 376–385 (IQNKRTKSIE). Positions 386–399 (ENNSLPPIVSTNGI) are enriched in polar residues. Residues 419–434 (NEDDEDDEDEADFEDV) are compositionally biased toward acidic residues.

It belongs to the TFIIE alpha subunit family. In terms of assembly, TFIIE is a tetramer of two alpha (tfa1) and two beta (tfa2) subunits.

It is found in the nucleus. Its function is as follows. Recruits TFIIH to the initiation complex and stimulates the RNA polymerase II C-terminal domain kinase and DNA-dependent ATPase activities of TFIIH. Both TFIIH and TFIIE are required for promoter clearance by RNA polymerase. The polypeptide is Transcription initiation factor IIE subunit alpha (tfa1) (Schizosaccharomyces pombe (strain 972 / ATCC 24843) (Fission yeast)).